We begin with the raw amino-acid sequence, 362 residues long: 2-aminoethylphosphonate--pyruvate transaminase (362 aa).

Residue K193 is modified to N6-(pyridoxal phosphate)lysine.

It belongs to the class-V pyridoxal-phosphate-dependent aminotransferase family. PhnW subfamily. As to quaternary structure, homodimer. It depends on pyridoxal 5'-phosphate as a cofactor.

The enzyme catalyses (2-aminoethyl)phosphonate + pyruvate = phosphonoacetaldehyde + L-alanine. Involved in phosphonate degradation. This chain is 2-aminoethylphosphonate--pyruvate transaminase, found in Phocaeicola vulgatus (strain ATCC 8482 / DSM 1447 / JCM 5826 / CCUG 4940 / NBRC 14291 / NCTC 11154) (Bacteroides vulgatus).